The sequence spans 405 residues: Multifunctional CCA protein (405 aa).

Positions 8 and 11 each coordinate ATP. Residues G8 and R11 each contribute to the CTP site. Residues D21 and D23 each contribute to the Mg(2+) site. R91, R137, and R140 together coordinate ATP. Residues R91, R137, and R140 each contribute to the CTP site. Residues 228 to 329 (TGIHSMMVLE…NDFLDKCDVW (102 aa)) form the HD domain.

It belongs to the tRNA nucleotidyltransferase/poly(A) polymerase family. Bacterial CCA-adding enzyme type 1 subfamily. As to quaternary structure, monomer. Can also form homodimers and oligomers. Mg(2+) is required as a cofactor. Ni(2+) serves as cofactor.

It catalyses the reaction a tRNA precursor + 2 CTP + ATP = a tRNA with a 3' CCA end + 3 diphosphate. It carries out the reaction a tRNA with a 3' CCA end + 2 CTP + ATP = a tRNA with a 3' CCACCA end + 3 diphosphate. Functionally, catalyzes the addition and repair of the essential 3'-terminal CCA sequence in tRNAs without using a nucleic acid template. Adds these three nucleotides in the order of C, C, and A to the tRNA nucleotide-73, using CTP and ATP as substrates and producing inorganic pyrophosphate. tRNA 3'-terminal CCA addition is required both for tRNA processing and repair. Also involved in tRNA surveillance by mediating tandem CCA addition to generate a CCACCA at the 3' terminus of unstable tRNAs. While stable tRNAs receive only 3'-terminal CCA, unstable tRNAs are marked with CCACCA and rapidly degraded. This is Multifunctional CCA protein from Pseudoalteromonas atlantica (strain T6c / ATCC BAA-1087).